Consider the following 418-residue polypeptide: Tubulin alpha chain (418 aa).

Positions 11, 71, 140, 144, 179, 206, and 228 each coordinate GTP. Glu71 is a Mg(2+) binding site. Residue Glu255 is part of the active site.

The protein belongs to the tubulin family. As to quaternary structure, dimer of alpha and beta chains. A typical microtubule is a hollow water-filled tube with an outer diameter of 25 nm and an inner diameter of 15 nM. Alpha-beta heterodimers associate head-to-tail to form protofilaments running lengthwise along the microtubule wall with the beta-tubulin subunit facing the microtubule plus end conferring a structural polarity. Microtubules usually have 13 protofilaments but different protofilament numbers can be found in some organisms and specialized cells. The cofactor is Mg(2+).

Its subcellular location is the cytoplasm. It is found in the cytoskeleton. The enzyme catalyses GTP + H2O = GDP + phosphate + H(+). Its function is as follows. Tubulin is the major constituent of microtubules, a cylinder consisting of laterally associated linear protofilaments composed of alpha- and beta-tubulin heterodimers. Microtubules grow by the addition of GTP-tubulin dimers to the microtubule end, where a stabilizing cap forms. Below the cap, tubulin dimers are in GDP-bound state, owing to GTPase activity of alpha-tubulin. In Ajellomyces capsulatus (Darling's disease fungus), this protein is Tubulin alpha chain (TUB1).